A 376-amino-acid polypeptide reads, in one-letter code: Carbamoyl phosphate synthase small chain (376 aa).

Residues 1–184 (MKAILALADG…SEGYQQQTGE (184 aa)) form a CPSase region. The L-glutamine site is built by Ser45, Gly236, and Gly238. Positions 188 to 374 (KVVAYDFGIK…ADLMEKNRQS (187 aa)) constitute a Glutamine amidotransferase type-1 domain. Cys263 functions as the Nucleophile in the catalytic mechanism. L-glutamine-binding residues include Leu264, Gln267, Asn305, Gly307, and Phe308. Catalysis depends on residues His347 and Glu349.

It belongs to the CarA family. As to quaternary structure, composed of two chains; the small (or glutamine) chain promotes the hydrolysis of glutamine to ammonia, which is used by the large (or ammonia) chain to synthesize carbamoyl phosphate. Tetramer of heterodimers (alpha,beta)4.

It catalyses the reaction hydrogencarbonate + L-glutamine + 2 ATP + H2O = carbamoyl phosphate + L-glutamate + 2 ADP + phosphate + 2 H(+). It carries out the reaction L-glutamine + H2O = L-glutamate + NH4(+). Its pathway is amino-acid biosynthesis; L-arginine biosynthesis; carbamoyl phosphate from bicarbonate: step 1/1. It participates in pyrimidine metabolism; UMP biosynthesis via de novo pathway; (S)-dihydroorotate from bicarbonate: step 1/3. In terms of biological role, small subunit of the glutamine-dependent carbamoyl phosphate synthetase (CPSase). CPSase catalyzes the formation of carbamoyl phosphate from the ammonia moiety of glutamine, carbonate, and phosphate donated by ATP, constituting the first step of 2 biosynthetic pathways, one leading to arginine and/or urea and the other to pyrimidine nucleotides. The small subunit (glutamine amidotransferase) binds and cleaves glutamine to supply the large subunit with the substrate ammonia. The chain is Carbamoyl phosphate synthase small chain from Syntrophotalea carbinolica (strain DSM 2380 / NBRC 103641 / GraBd1) (Pelobacter carbinolicus).